We begin with the raw amino-acid sequence, 94 residues long: Integration host factor subunit beta (94 aa).

The protein belongs to the bacterial histone-like protein family. Heterodimer of an alpha and a beta chain.

Its function is as follows. This protein is one of the two subunits of integration host factor, a specific DNA-binding protein that functions in genetic recombination as well as in transcriptional and translational control. This is Integration host factor subunit beta from Ruegeria pomeroyi (strain ATCC 700808 / DSM 15171 / DSS-3) (Silicibacter pomeroyi).